The sequence spans 574 residues: Sulfate adenylyltransferase (574 aa).

The segment at 1–169 (MANTPHGGVL…LEAVNKLNHY (169 aa)) is N-terminal. Residues 170–394 (DYVGLRYTPA…LRESSPPRAL (225 aa)) are catalytic. Q197 serves as a coordination point for sulfate. ATP is bound by residues 197–200 (QTRN) and 291–294 (GRDH). Active-site residues include T198, R199, and N200. R199 serves as a coordination point for sulfate. A295 lines the sulfate pocket. Position 333 (V333) interacts with ATP. The segment at 395–574 (QGFTIFLTGY…LESEGYFERL (180 aa)) is allosteric regulation domain; adenylyl-sulfate kinase-like. 3'-phosphoadenylyl sulfate contacts are provided by residues 434 to 437 (DTVR), R451, 477 to 478 (IA), and R516.

This sequence in the N-terminal section; belongs to the sulfate adenylyltransferase family. The protein in the C-terminal section; belongs to the APS kinase family. Homohexamer. Dimer of trimers.

It localises to the cytoplasm. It carries out the reaction sulfate + ATP + H(+) = adenosine 5'-phosphosulfate + diphosphate. The protein operates within sulfur metabolism; hydrogen sulfide biosynthesis; sulfite from sulfate: step 1/3. With respect to regulation, allosterically inhibited by 3'-phosphoadenosine 5'-phosphosulfate (PAPS). In terms of biological role, catalyzes the first intracellular reaction of sulfate assimilation, forming adenosine-5'-phosphosulfate (APS) from inorganic sulfate and ATP. Plays an important role in sulfate activation as a component of the biosynthesis pathway of sulfur-containing amino acids. This chain is Sulfate adenylyltransferase, found in Emericella nidulans (strain FGSC A4 / ATCC 38163 / CBS 112.46 / NRRL 194 / M139) (Aspergillus nidulans).